The primary structure comprises 118 residues: MKHRVGRVEQEIQREVNDILLKRVRDPRVEGVTITDINLSGDLQHVKVYYSILSNLASDAEKAQKGLDKAKGLIRSELGQRIKLYKIPEITFEQDGSVRYGEHIDELLRKLHQDEAQR.

The protein belongs to the RbfA family. In terms of assembly, monomer. Binds 30S ribosomal subunits, but not 50S ribosomal subunits or 70S ribosomes.

It localises to the cytoplasm. One of several proteins that assist in the late maturation steps of the functional core of the 30S ribosomal subunit. Associates with free 30S ribosomal subunits (but not with 30S subunits that are part of 70S ribosomes or polysomes). Required for efficient processing of 16S rRNA. May interact with the 5'-terminal helix region of 16S rRNA. The protein is Ribosome-binding factor A of Latilactobacillus sakei subsp. sakei (strain 23K) (Lactobacillus sakei subsp. sakei).